Consider the following 390-residue polypeptide: Ureide permease 1 (390 aa).

Over 1–9 the chain is Extracellular; that stretch reads MYMIESKGG. The chain crosses the membrane as a helical span at residues 10–30; that stretch reads AIACMLLALLFLGTWPAIMTL. Over 31–44 the chain is Cytoplasmic; it reads TERRGRLPQHTYLD. The chain crosses the membrane as a helical span at residues 45–65; the sequence is YTLTNLLAAVIIALTLGEIGP. Topologically, residues 66–78 are extracellular; that stretch reads SRPNFFTQLSQDN. A helical transmembrane segment spans residues 79–99; sequence WQSVMFAMAGGIVLSLGNLAT. At 100 to 101 the chain is on the cytoplasmic side; it reads QY. The helical transmembrane segment at 102-122 threads the bilayer; it reads AWAYVGLSVTEVITASITVVI. Over 123–136 the chain is Extracellular; it reads GTTLNYFLDDRINR. Residues 137–157 traverse the membrane as a helical segment; sequence AEVLFPGVACFLIAVCFGSAV. The Cytoplasmic segment spans residues 158-221; sequence HKSNAADNKT…RAIKVFGKST (64 aa). An ATP-binding site is contributed by 213–220; sequence AIKVFGKS. The chain crosses the membrane as a helical span at residues 222 to 242; it reads IIGLVITFFAGICFSLFSPAF. Residues 243–261 are Extracellular-facing; that stretch reads NLATNDQWHTLKHGVPKLN. A helical transmembrane segment spans residues 262-282; sequence VYTAFFYFSISAFVVALILNI. Topologically, residues 283–307 are cytoplasmic; it reads RFLYWPILGLPRSSFKAYLNDWNGR. Residues 308–328 form a helical membrane-spanning segment; the sequence is GWSFLAGFLCGFGNGLQFMGG. At 329–333 the chain is on the extracellular side; sequence QAAGY. Residues 334 to 354 form a helical membrane-spanning segment; the sequence is AAADAVQALPLVSTFWGILLF. The Cytoplasmic portion of the chain corresponds to 355-363; it reads GEYRRSSRK. The helical transmembrane segment at 364 to 384 threads the bilayer; the sequence is TYTLLISMLLMFIVAVAVLMA. The Extracellular portion of the chain corresponds to 385–390; sequence SSGHRK.

The protein belongs to the plant ureide permease (TC 2.A.7.19) family. In terms of tissue distribution, expressed in leaves, flowers, roots and stems.

The protein localises to the membrane. Proton-coupled transporter that transports a wide spectrum of oxo derivatives of heterocyclic nitrogen compounds, including allantoin, uric acid and xanthine, but not adenine. Mediates high affinity transport of uracil and 5-fluorouracil (a toxic uracil analog). Mediates transport of free pyrimidines and may function during early seedling development in salvage pathways, by the utilization of pyrimidines from seed storage tissue. This chain is Ureide permease 1, found in Arabidopsis thaliana (Mouse-ear cress).